The sequence spans 436 residues: GTPase Der (436 aa).

2 EngA-type G domains span residues 4-167 (PTIA…PAQE) and 175-351 (IKFS…ESQN). Residues 10-17 (GRPNVGKS), 57-61 (DTGGI), 119-122 (NKVD), 181-188 (GRPNVGKS), 229-233 (DTAGM), and 294-297 (NKWD) contribute to the GTP site. A KH-like domain is found at 352-436 (TRIPSAVLND…PIHLIARKRK (85 aa)).

The protein belongs to the TRAFAC class TrmE-Era-EngA-EngB-Septin-like GTPase superfamily. EngA (Der) GTPase family. As to quaternary structure, associates with the 50S ribosomal subunit.

Functionally, GTPase that plays an essential role in the late steps of ribosome biogenesis. The polypeptide is GTPase Der (Streptococcus suis (strain 98HAH33)).